Consider the following 391-residue polypeptide: MNIHEYQGKDILRKFGVAVPKGIVAYSAEEAKQAAEQLFAEQDSPVVVIKAQIHAGGRGKAGGVKLAKSPEEAHEIASQMLGTTLVTHQTGPEGKEVRRLLVEEGMNIDREFYVGITLDRATSNNVLMISTEGGMEIEKVAEETPELLLKIQVDARFGLQGFQAREAAFFLGLEGEQFRNAVSFITALYNAYTSIDAALAEINPLVVTKEGRVLALDAKINFDSNALYRHKDFIELRDISEEDPFEVEASKSNLNYVRLDGNVGCMVNGAGLAMATMDMIQLAGGRPANFLDVGGGASPQTVEEGFKIILSDKNVKAILVNIFGGIVRCDRVAGGIIEAARKIGLNLPVIVRLEGTNADIAQKMLDESGLNLIAADGLKDAAQKVNQALSA.

Residues 9-248 (KDILRKFGVA…ISEEDPFEVE (240 aa)) enclose the ATP-grasp domain. ATP-binding positions include Lys-50, 57-59 (GRG), Glu-103, Met-106, and Glu-111. 2 residues coordinate Mg(2+): Asn-203 and Asp-217. Residues Asn-268 and 325–327 (GIV) contribute to the substrate site.

This sequence belongs to the succinate/malate CoA ligase beta subunit family. As to quaternary structure, heterotetramer of two alpha and two beta subunits. Mg(2+) serves as cofactor.

The enzyme catalyses succinate + ATP + CoA = succinyl-CoA + ADP + phosphate. It catalyses the reaction GTP + succinate + CoA = succinyl-CoA + GDP + phosphate. It participates in carbohydrate metabolism; tricarboxylic acid cycle; succinate from succinyl-CoA (ligase route): step 1/1. Succinyl-CoA synthetase functions in the citric acid cycle (TCA), coupling the hydrolysis of succinyl-CoA to the synthesis of either ATP or GTP and thus represents the only step of substrate-level phosphorylation in the TCA. The beta subunit provides nucleotide specificity of the enzyme and binds the substrate succinate, while the binding sites for coenzyme A and phosphate are found in the alpha subunit. This Chlorobium luteolum (strain DSM 273 / BCRC 81028 / 2530) (Pelodictyon luteolum) protein is Succinate--CoA ligase [ADP-forming] subunit beta.